The chain runs to 149 residues: Transthyretin (149 aa).

The signal sequence occupies residues 1–20; it reads MAFHSLLLLCLAGLLFVSEA. Cysteine 32 carries the post-translational modification Sulfocysteine. Lysine 37 serves as a coordination point for L-thyroxine. Glutamate 64 is modified (4-carboxyglutamate). Residues glutamate 76 and serine 139 each coordinate L-thyroxine.

Belongs to the transthyretin family. In terms of assembly, homotetramer. Dimer of dimers. In the homotetramer, subunits assemble around a central channel that can accommodate two ligand molecules. Interacts with RBP4. Sulfonation of the reactive cysteine Cys-32 enhances the stability of the native conformation of TTR, avoiding misassembly of the protein leading to amyloid formation. In terms of tissue distribution, detected in plasma (at protein level). Detected in liver.

Its subcellular location is the secreted. Functionally, thyroid hormone-binding protein. Probably transports thyroxine from the bloodstream to the brain. In Petaurus breviceps (Australian sugar glider), this protein is Transthyretin (TTR).